The following is an 802-amino-acid chain: DSC E3 ubiquitin ligase complex subunit A (802 aa).

The signal sequence occupies residues 1–22 (MDNRGSFFFLLIVFYLLLSSQS). Residues 23–381 (RPPLLDQDRE…TGPKIEEYDK (359 aa)) are Lumenal-facing. 6 N-linked (GlcNAc...) asparagine glycosylation sites follow: Asn-48, Asn-71, Asn-115, Asn-126, Asn-148, and Asn-166. A helical transmembrane segment spans residues 382–402 (YSARLVFIICGVFAAQITLLL). Residues 403–429 (RQIKEASTPSTRSRISFYTIALMAFGD) are Cytoplasmic-facing. Residues 430-450 (AFVLIFILLELYPAVSFLVMA) form a helical membrane-spanning segment. At 451–453 (TAA) the chain is on the lumenal side. A helical transmembrane segment spans residues 454–474 (FLTFLSVSYIGMKFMMEIWAV). Residues 475-550 (QAPERREQER…QETRNDVGAM (76 aa)) are Cytoplasmic-facing. The interval 478–541 (ERREQERRSN…TNRGTTSAAQ (64 aa)) is disordered. Positions 532-541 (TNRGTTSAAQ) are enriched in polar residues. A helical membrane pass occupies residues 551 to 571 (YARFYFVLFVMLIISIWSFLW). Over 572–574 (PNR) the chain is Lumenal. Residues 575 to 595 (LGALYARALAFVYLSFWTPQI) form a helical membrane-spanning segment. The Cytoplasmic segment spans residues 596 to 608 (GRNIIRNCRKALR). A helical transmembrane segment spans residues 609-629 (WDFVIGQSILRLFPFVYFLTV). At 630–642 (RGNVLFIHPDTTT) the chain is on the lumenal side. Residues 643 to 663 (AFALAGWVWIQVWVLASQDIL) traverse the membrane as a helical segment. Topologically, residues 664 to 802 (GPRFFVPRGW…PICRESIPPV (139 aa)) are cytoplasmic. The RING-type; atypical zinc-finger motif lies at 732 to 796 (CAICMQEIEV…RLRLQCPICR (65 aa)).

In terms of assembly, component of the DSC E3 ubiquitin ligase complex composed of dscA, dscB, dscC and dscD.

Its subcellular location is the endoplasmic reticulum membrane. It catalyses the reaction S-ubiquitinyl-[E2 ubiquitin-conjugating enzyme]-L-cysteine + [acceptor protein]-L-lysine = [E2 ubiquitin-conjugating enzyme]-L-cysteine + N(6)-ubiquitinyl-[acceptor protein]-L-lysine.. It functions in the pathway protein modification; protein ubiquitination. Catalytic component of the DSC E3 ubiquitin ligase complex which is required for the srbA transcriptional activator proteolytic cleavage to release the soluble transcription factor from the membrane in low oxygen or sterol conditions. Required for growth during hypoxia and triazole drug susceptibility, as well as for virulence in a murine model of invasive pulmonary aspergillosis (IPA). This is DSC E3 ubiquitin ligase complex subunit A from Aspergillus fumigatus (strain CBS 144.89 / FGSC A1163 / CEA10) (Neosartorya fumigata).